The sequence spans 1488 residues: Indigoidine synthase (1488 aa).

The segment at 229-585 (KNRAQRHPEQ…GGDGVARGYL (357 aa)) is adenylation. In terms of domain architecture, Carrier spans 1137–1212 (APRNPLEHQV…KLAAWLSRAR (76 aa)). At Ser-1172 the chain carries O-(pantetheine 4'-phosphoryl)serine. A thioesterase region spans residues 1230-1346 (PIYCWPGLGG…ERVAAMNRKA (117 aa)).

The protein belongs to the ATP-dependent AMP-binding enzyme family. Requires pantetheine 4'-phosphate as cofactor.

It catalyses the reaction 2 FMN + 2 L-glutamine + 2 ATP + O2 = indigoidine + 2 FMNH2 + 2 AMP + 2 diphosphate + 2 H2O. The enzyme catalyses FMN + L-glutamine + ATP = 3-amino-1,5-dihydropyridine-2,6-dione + FMNH2 + AMP + diphosphate. The catalysed reaction is 2 3-amino-1,5-dihydropyridine-2,6-dione + O2 = indigoidine + 2 H2O. Its pathway is pigment biosynthesis. Functionally, nonribosomal peptide synthetase involved in the biosynthesis of the blue pigment indigoidine, which is implicated in pathogenicity and protection from oxidative stress. Catalyzes the synthesis of the blue pigment using L-Gln as a substrate. Two glutamine molecules are cyclized and oxidized to form indigoidine. In Dickeya dadantii (strain 3937) (Erwinia chrysanthemi (strain 3937)), this protein is Indigoidine synthase.